The primary structure comprises 363 residues: UDP-N-acetylglucosamine--N-acetylmuramyl-(pentapeptide) pyrophosphoryl-undecaprenol N-acetylglucosamine transferase (363 aa).

Residues 10 to 12 (TGG), Asn124, Ser195, Ile250, and Gln295 contribute to the UDP-N-acetyl-alpha-D-glucosamine site.

Belongs to the glycosyltransferase 28 family. MurG subfamily.

It is found in the cell membrane. The catalysed reaction is di-trans,octa-cis-undecaprenyl diphospho-N-acetyl-alpha-D-muramoyl-L-alanyl-D-glutamyl-meso-2,6-diaminopimeloyl-D-alanyl-D-alanine + UDP-N-acetyl-alpha-D-glucosamine = di-trans,octa-cis-undecaprenyl diphospho-[N-acetyl-alpha-D-glucosaminyl-(1-&gt;4)]-N-acetyl-alpha-D-muramoyl-L-alanyl-D-glutamyl-meso-2,6-diaminopimeloyl-D-alanyl-D-alanine + UDP + H(+). It participates in cell wall biogenesis; peptidoglycan biosynthesis. Cell wall formation. Catalyzes the transfer of a GlcNAc subunit on undecaprenyl-pyrophosphoryl-MurNAc-pentapeptide (lipid intermediate I) to form undecaprenyl-pyrophosphoryl-MurNAc-(pentapeptide)GlcNAc (lipid intermediate II). The polypeptide is UDP-N-acetylglucosamine--N-acetylmuramyl-(pentapeptide) pyrophosphoryl-undecaprenol N-acetylglucosamine transferase (Listeria monocytogenes serotype 4a (strain HCC23)).